Here is a 491-residue protein sequence, read N- to C-terminus: 3-octaprenyl-4-hydroxybenzoate carboxy-lyase (491 aa).

Asn172 contributes to the Mn(2+) binding site. Prenylated FMN is bound by residues 175-177 (IYR), 189-191 (RWL), and 194-195 (RG). Glu238 lines the Mn(2+) pocket. The Proton donor role is filled by Asp287.

This sequence belongs to the UbiD family. Homohexamer. It depends on prenylated FMN as a cofactor. Requires Mn(2+) as cofactor.

The protein resides in the cell membrane. The enzyme catalyses a 4-hydroxy-3-(all-trans-polyprenyl)benzoate + H(+) = a 2-(all-trans-polyprenyl)phenol + CO2. Its pathway is cofactor biosynthesis; ubiquinone biosynthesis. Functionally, catalyzes the decarboxylation of 3-octaprenyl-4-hydroxy benzoate to 2-octaprenylphenol, an intermediate step in ubiquinone biosynthesis. The sequence is that of 3-octaprenyl-4-hydroxybenzoate carboxy-lyase from Klebsiella pneumoniae subsp. pneumoniae (strain ATCC 700721 / MGH 78578).